The following is an 884-amino-acid chain: Kinesin-like protein KIN-7C (884 aa).

A Kinesin motor domain is found at 33–355; that stretch reads RIQVLVRLRP…LLFGSCAKEV (323 aa). 119 to 126 is a binding site for ATP; that stretch reads GQTSSGKT. Residues 364-435 adopt a coiled-coil conformation; it reads VMSDKALVKH…LQDLLQSVGD (72 aa). Residues 434–530 form a disordered region; the sequence is GDHDLNRQVQ…VNSRHSRPSG (97 aa). Residues 449–460 are compositionally biased toward low complexity; it reads RSPPSVGMPPSV. Over residues 461–483 the composition is skewed to basic and acidic residues; sequence SRDDSSQVSHDDSDLYKEVRCIE. Polar residues predominate over residues 498 to 523; the sequence is GESSSPQDSNMNSGLHGNDSNASVNS.

This sequence belongs to the TRAFAC class myosin-kinesin ATPase superfamily. Kinesin family. KIN-7 subfamily.

This chain is Kinesin-like protein KIN-7C, found in Oryza sativa subsp. japonica (Rice).